Consider the following 754-residue polypeptide: Endoribonuclease Dicer-like (754 aa).

The region spanning 132-251 (QLMCDAKRLS…LPPELCLLLP (120 aa)) is the PAZ domain. RNase III domains follow at residues 298–418 (FAIT…TGPN) and 613–734 (AQTV…LACG). Positions 336, 404, 407, 649, 720, and 723 each coordinate Mn(2+).

Homodimer. Mg(2+) serves as cofactor. The cofactor is Mn(2+).

Involved in cleaving double-stranded RNA in the RNA interference (RNAi) pathway. It produces 21 to 23 bp dsRNAs (siRNAs) which target the selective destruction of homologous RNAs. This Giardia intestinalis (strain ATCC 50803 / WB clone C6) (Giardia lamblia) protein is Endoribonuclease Dicer-like.